A 250-amino-acid polypeptide reads, in one-letter code: 2,3-bisphosphoglycerate-dependent phosphoglycerate mutase (250 aa).

Residues 8–15 (RHGESQWN), 21–22 (TG), R60, 87–90 (ERHY), K98, 114–115 (RR), and 183–184 (GN) contribute to the substrate site. H9 (tele-phosphohistidine intermediate) is an active-site residue. Residue E87 is the Proton donor/acceptor of the active site.

It belongs to the phosphoglycerate mutase family. BPG-dependent PGAM subfamily. In terms of assembly, homodimer.

It carries out the reaction (2R)-2-phosphoglycerate = (2R)-3-phosphoglycerate. It functions in the pathway carbohydrate degradation; glycolysis; pyruvate from D-glyceraldehyde 3-phosphate: step 3/5. Its function is as follows. Catalyzes the interconversion of 2-phosphoglycerate and 3-phosphoglycerate. The chain is 2,3-bisphosphoglycerate-dependent phosphoglycerate mutase from Bordetella avium (strain 197N).